Reading from the N-terminus, the 185-residue chain is CD160 antigen (185 aa).

Residues 1-27 (MQRILMAPGQSCCALAILLAIVNFQHG) form the signal peptide. Residues 28 to 136 (GCIHVTSSAS…HGHFLSVLVT (109 aa)) form the Ig-like V-type domain. 2 cysteine pairs are disulfide-bonded: cysteine 47/cysteine 115 and cysteine 64/cysteine 71. N-linked (GlcNAc...) asparagine glycans are attached at residues asparagine 138 and asparagine 156. Serine 160 is lipidated: GPI-anchor amidated serine. Residues 161–185 (SGFLQVKAWGMLVTSLVALQALYTL) constitute a propeptide, removed in mature form.

Homomultimer; disulfide-linked. Interacts with classical and non-classical MHC class I molecules. Interacts with TNFRSF14 (via cysteine-rich domain 1); this interaction is direct. Interacts with LCK and CD247/CD3 zeta chain. Expressed in resting and activated NK cell subsets (at protein level). Expressed in resting NKT cells (at protein level). Expressed in activated CD8+ T cells (at protein level). Highly expressed in intraepithelial lymphocyte (IEL) subsets, particularly in innate-like CD8A-positive IELs (at protein level).

Its subcellular location is the cell membrane. The protein localises to the secreted. In terms of biological role, receptor on immune cells capable to deliver stimulatory or inhibitory signals that regulate cell activation and differentiation. Exists as a GPI-anchored and as a transmembrane form, each likely initiating distinct signaling pathways via phosphoinositol 3-kinase in activated NK cells and via LCK and CD247/CD3 zeta chain in activated T cells. Receptor for both classical and non-classical MHC class I molecules. Receptor or ligand for TNF superfamily member TNFRSF14, participating in bidirectional cell-cell contact signaling between antigen presenting cells and lymphocytes. Upon ligation of TNFRSF14, provides stimulatory signal to NK cells enhancing IFNG production and anti-tumor immune response. On activated CD4+ T cells, interacts with TNFRSF14 and down-regulates CD28 costimulatory signaling, restricting memory and alloantigen-specific immune response. In the context of bacterial infection, acts as a ligand for TNFRSF14 on epithelial cells, triggering the production of antimicrobial proteins and pro-inflammatory cytokines. Its function is as follows. The soluble GPI-cleaved form, usually released by activated lymphocytes, might play an immune regulatory role by limiting lymphocyte effector functions. This Mus musculus (Mouse) protein is CD160 antigen.